We begin with the raw amino-acid sequence, 814 residues long: Coiled-coil and C2 domain-containing protein 1-like (814 aa).

The span at 1–11 shows a compositional bias: basic and acidic residues; it reads MFAKRKPEPAK. 2 disordered regions span residues 1–136 and 157–263; these read MFAK…TFLP and EANA…RSRQ. The segment covering 25 to 47 has biased composition (acidic residues); it reads IPDDFDPTSGYGDDDGGDSDLEA. The span at 73 to 85 shows a compositional bias: basic and acidic residues; it reads DLDKMIADSLRDV. Acidic residues-rich tracts occupy residues 86–100 and 110–130; these read SDDD…DSDL and LEEE…EEEP. A DM14 1 region spans residues 143-201; it reads LGIIKQRLEIYKQAEANAKASGDSGKARRFGRGLKTLQDLHKQAAAGKTINVDDIPPEV. The span at 205–230 shows a compositional bias: low complexity; it reads PAGDPSPAADESPAPSTPVSQPTRVA. Positions 231–254 are enriched in pro residues; sequence PAPPTPTSPPAATPPPAPATPPNP. DM14 stretches follow at residues 256 to 314 and 358 to 416; these read VAQM…PPPP and LEAL…PVPP. Positions 351–378 form a coiled coil; that stretch reads AAAAESMLEALQRRLEKYKSVEAAAKAE. Pro residues predominate over residues 414–425; sequence VPPGFGPLPSTE. Positions 414 to 486 are disordered; that stretch reads VPPGFGPLPS…LTTRVTGNHQ (73 aa). Positions 426–462 are enriched in low complexity; sequence PAPAATPSLPTSPTSPPATASTSAGGTPSGSSATTPT. The span at 475–486 shows a compositional bias: polar residues; it reads TELTTRVTGNHQ. A DM14 4 region spans residues 495–553; it reads MKLLLERQKEFKVAAIEAKKAGEIDQAKEYLKIYKGFDSLLNAASSGLPVDLSTLPVPP. A C2 domain is found at 633-772; it reads RKGQPLPKFH…ETKCDIHDTY (140 aa).

This sequence belongs to the CC2D1 family. As to quaternary structure, interacts (via DM14 domains 1 and 3) with shrb; the interaction is direct and blocks access to the surface involved in shrb polymerization. This interaction may be required for the ESCRT-III complex role in multivesicular body formation.

It is found in the cytoplasm. It localises to the cytosol. The protein localises to the apicolateral cell membrane. Its subcellular location is the cell cortex. The protein resides in the endosome. Functionally, phosphatidyl inositol monophosphate binding protein involved in endosomal protein sorting through regulation of the endosomal sorting required for transport (ESCRT) pathway. Required for full activity of the ESCRT-III complex core component shrb/shrub, probably by preventing its inappropriate polymerisation. Required, but not essential, for the efficient generation of intraluminal vesicles (ILVs) in multivesicular bodies (MVBs). Involved in a late stage of the endosomal pathway targeting transmembrane proteins of the plasma membrane for lysosomal degradation. Plays a critical role in regulation of multiple signal transduction pathways, including the Notch and BMP/decapentaplegic (dpp) signaling pathways, through targeting of membrane bound receptors to multivesicular bodies, isolating them from the cytoplasm and targeting them for lysosomal degradation. Involved in targeting N/Notch for endosomal degradation, negatively regulating the Notch signaling pathway. Regulates Notch signaling in imaginal disk cells and follicle cells during oogenesis and multiple developmental processes, including development of wings, veins, legs, eyes and bristles. Restricts the activity of Notch to the dorsoventral (D/V) boundary of the wing imaginal disk. In external sensory organ development regulates Notch signaling during asymmetric cell division and differentiation of sensory organ precursor cells. May be involved in regulation of apoptosis and cell growth independent of Notch signaling. Involved in targeting tkv for endosomal degradation, negatively regulating the BMP/decapentaplegic (dpp) signaling pathway. Regulates the BMP/dpp signaling pathway in follicle cells during oogenesis, but not in imaginal disk cells during wing development. May be involved in differentiation or morphogenesis of peripodial epithelial cells in the developing imaginal disk. Involved in abscission of germline cells during oogenesis. The protein is Coiled-coil and C2 domain-containing protein 1-like of Drosophila pseudoobscura pseudoobscura (Fruit fly).